A 255-amino-acid polypeptide reads, in one-letter code: Homeobox protein DLX-1 (255 aa).

A compositionally biased stretch (polar residues) spans 1-14 (MTMTTMPESLNSPV). Disordered regions lie at residues 1–38 (MTMT…MSHG) and 95–118 (SLAQ…EGGE). A compositionally biased stretch (low complexity) spans 25-36 (PPNQQMSPSPMS). Over residues 100–112 (RLEDPGADSEKST) the composition is skewed to basic and acidic residues. The segment at residues 128-187 (IRKPRTIYSSLQLQALNRRFQQTQYLALPERAELAASLGLTQTQVKIWFQNKRSKFKKLM) is a DNA-binding region (homeobox). A disordered region spans residues 204–230 (ALSAGSPPVPPGWNPNSSSGKGSGGNA).

It belongs to the distal-less homeobox family. In terms of assembly, interacts with SMAD4 (via homeobox DNA-binding domain). Interacts (via homeobox DNA-binding domain) with POU4F2; this interaction suppresses DLX1-mediated transcriptional activity in postnatal retina and enhances retinal ganglion cell (RGC) differentiation. Expressed in hematopoietic cell lines.

The protein localises to the nucleus. Plays a role as a transcriptional activator or repressor. Inhibits several cytokine signaling pathways, such as TGFB1, activin-A/INHBA and BMP4 by interfering with the transcriptional stimulatory activity of transcription factors, such as MSX2, FAST2, SMAD2 and SMAD3 during hematopoietic cell differentiation. Plays a role in terminal differentiation of interneurons, such as amacrine and bipolar cells in the developing retina. Likely to play a regulatory role in the development of the ventral forebrain. May play a role in craniofacial patterning and morphogenesis and may be involved in the early development of diencephalic subdivisions. The protein is Homeobox protein DLX-1 (DLX1) of Homo sapiens (Human).